The following is a 283-amino-acid chain: Non-selective voltage-gated ion channel VDAC1 (283 aa).

Ala2 carries the post-translational modification N-acetylalanine. ATP is bound at residue Lys12. Lys12 is covalently cross-linked (Glycyl lysine isopeptide (Lys-Gly) (interchain with G-Cter in ubiquitin)). Ser13 carries the post-translational modification Phosphoserine. At Thr19 the chain carries Phosphothreonine. Lys20 is a binding site for ATP. An N6-acetyllysine; alternate modification is found at Lys20. Residue Lys20 is modified to N6-succinyllysine; alternate. Lys20 participates in a covalent cross-link: Glycyl lysine isopeptide (Lys-Gly) (interchain with G-Cter in ubiquitin); alternate. Transmembrane regions (beta stranded) follow at residues 26–35 and 39–47; these read LIKLDLKTKS and LEFTSSGSA. Glycyl lysine isopeptide (Lys-Gly) (interchain with G-Cter in ubiquitin) cross-links involve residues Lys53 and Lys61. A beta stranded membrane pass occupies residues 54 to 64; it reads VTGSLETKYRW. Tyr67 carries the post-translational modification Phosphotyrosine. 3 beta stranded membrane passes run 69–76, 80–89, and 95–104; these read LTFTEKWN, TLGTEITVED, and LKLTFDSSFS. Thr107 is modified (phosphothreonine). An N6-acetyllysine; alternate modification is found at Lys109. A Glycyl lysine isopeptide (Lys-Gly) (interchain with G-Cter in ubiquitin); alternate cross-link involves residue Lys109. Lys110 participates in a covalent cross-link: Glycyl lysine isopeptide (Lys-Gly) (interchain with G-Cter in ubiquitin). 4 consecutive transmembrane segments (beta stranded) span residues 111–120, 123–130, 137–145, and 150–158; these read NAKIKTGYKR, INLGCDVD, SIRGALVLG, and LAGYQMNFE. A Glycyl lysine isopeptide (Lys-Gly) (interchain with G-Cter in ubiquitin) cross-link involves residue Lys161. 6 beta stranded membrane passes run 163–175, 178–185, 189–198, 202–211, 218–227, and 231–238; these read RVTQ…GYKT, FQLHTNVN, EFGGSIYQKV, LETAVNLAWT, RFGIAAKYQI, and ACFSAKVN. A Phosphoserine; by NEK1 modification is found at Ser193. Ser240 carries the phosphoserine modification. 242–244 contacts NAD(+); it reads LIG. A beta stranded membrane pass occupies residues 242–251; the sequence is LIGLGYTQTL. Residue Lys252 is modified to N6-acetyllysine. A beta stranded transmembrane segment spans residues 254 to 263; it reads GIKLTLSALL. NAD(+) is bound at residue 260–264; sequence SALLD. At Lys266 the chain carries N6-acetyllysine; alternate. A Glycyl lysine isopeptide (Lys-Gly) (interchain with G-Cter in ubiquitin); alternate cross-link involves residue Lys266. The beta stranded transmembrane segment at 273-282 threads the bilayer; it reads HKLGLGLEFQ. Residue Lys274 forms a Glycyl lysine isopeptide (Lys-Gly) (interchain with G-Cter in ubiquitin) linkage.

Belongs to the eukaryotic mitochondrial porin family. Homodimer and homotrimer; in response to cyclic AMP or calcium; oligomerization is required for scramblase activity. Component of the mitochondrial permeability transition pore complex (mPTPC), at least composed of SPG7, VDAC1 and PPIF. Interacts with SPG7, NIPSNAP2 and SLC25A30. Interacts with hexokinases including HK1. The HK1-VDAC1 complex interacts with ATF2. Interacts with BCL2L1. Interacts with BAK1. Interacts with RTL10/BOP (via BH3 domain). Interacts with amyloid-beta and APP; induces VDAC1 dephosphorylation. Interacts with TMEM41B. Interacts with BCAP31. Interacts with HSPA9; this interaction couples ITPR1 to VDAC1. In terms of processing, phosphorylation at Ser-193 by NEK1 promotes the closed conformational state preventing excessive mitochondrial membrane permeability and subsequent apoptotic cell death after injury. Phosphorylation by the AKT-GSK3B axis stabilizes the protein probably by preventing ubiquitin-mediated proteasomal degradation. Ubiquitinated. Undergoes monoubiquitination and polyubiquitination by PRKN; monoubiquitination at Lys-274 inhibits apoptosis, whereas polyubiquitination leads to its degradation and promotes mitophagy. Deubiquitinated by USP30. As to expression, predominantly in brain astrocytes.

The protein localises to the mitochondrion outer membrane. The protein resides in the cell membrane. It is found in the membrane raft. It catalyses the reaction chloride(in) = chloride(out). The catalysed reaction is K(+)(in) = K(+)(out). It carries out the reaction ATP(in) = ATP(out). The enzyme catalyses Ca(2+)(in) = Ca(2+)(out). It catalyses the reaction Na(+)(in) = Na(+)(out). The catalysed reaction is Mg(2+)(in) = Mg(2+)(out). It carries out the reaction L-glutamate(out) = L-glutamate(in). The enzyme catalyses dopamine(out) = dopamine(in). It catalyses the reaction acetylcholine(in) = acetylcholine(out). The catalysed reaction is Fe(III)-[cytochrome c](out) = Fe(III)-[cytochrome c](in). It carries out the reaction a 1,2-diacyl-sn-glycero-3-phosphocholine(in) = a 1,2-diacyl-sn-glycero-3-phosphocholine(out). The enzyme catalyses a 1,2-diacyl-sn-glycero-3-phospho-L-serine(in) = a 1,2-diacyl-sn-glycero-3-phospho-L-serine(out). Inhibited by nitric oxide. In terms of biological role, non-selective voltage-gated ion channel that mediates the transport of anions and cations through the mitochondrion outer membrane and plasma membrane. The channel at the outer mitochondrial membrane allows diffusion of small hydrophilic molecules; in the plasma membrane it is involved in cell volume regulation and apoptosis. It adopts an open conformation at low or zero membrane potential and a closed conformation at potentials above 30-40 mV. The open state has a weak anion selectivity whereas the closed state is cation-selective. Binds various signaling molecules, including the sphingolipid ceramide, the phospholipid phosphatidylcholine, and the sterols cholesterol and oxysterol. In depolarized mitochondria, acts downstream of PRKN and PINK1 to promote mitophagy or prevent apoptosis; polyubiquitination by PRKN promotes mitophagy, while monoubiquitination by PRKN decreases mitochondrial calcium influx which ultimately inhibits apoptosis. May participate in the formation of the permeability transition pore complex (PTPC) responsible for the release of mitochondrial products that triggers apoptosis. May mediate ATP export from cells. Part of a complex composed of HSPA9, ITPR1 and VDAC1 that regulates mitochondrial calcium-dependent apoptosis by facilitating calcium transport from the ER lumen to the mitochondria intermembrane space thus providing calcium for the downstream calcium channel MCU that directly releases it into mitochondria matrix. Mediates cytochrome c efflux. Functionally, catalyzes the scrambling of phospholipids across the outer mitochondrial membrane; the mechanism is unrelated to channel activity and is capable of translocating both anionic and zwitterionic phospholipids. The protein is Non-selective voltage-gated ion channel VDAC1 of Bos taurus (Bovine).